The following is a 318-amino-acid chain: Protoheme IX farnesyltransferase (318 aa).

A run of 9 helical transmembrane segments spans residues 33–53 (VMSL…VSVH), 54–74 (PFIG…SGAL), 102–122 (GEAL…LALA), 125–145 (VLAG…YTMW), 154–174 (IVIG…AATG), 181–201 (WLMF…LALF), 225–245 (VHIL…AFSN), 246–266 (IGGP…LLGA), and 288–308 (FFKL…AEAL).

This sequence belongs to the UbiA prenyltransferase family. Protoheme IX farnesyltransferase subfamily. In terms of assembly, interacts with CtaA.

It localises to the cell inner membrane. It catalyses the reaction heme b + (2E,6E)-farnesyl diphosphate + H2O = Fe(II)-heme o + diphosphate. The protein operates within porphyrin-containing compound metabolism; heme O biosynthesis; heme O from protoheme: step 1/1. Functionally, converts heme B (protoheme IX) to heme O by substitution of the vinyl group on carbon 2 of heme B porphyrin ring with a hydroxyethyl farnesyl side group. The chain is Protoheme IX farnesyltransferase from Ruegeria pomeroyi (strain ATCC 700808 / DSM 15171 / DSS-3) (Silicibacter pomeroyi).